Consider the following 538-residue polypeptide: CTP synthase (538 aa).

Residues 1 to 269 (MSPRKYVIVT…ARLVERRLFG (269 aa)) form an amidoligase domain region. Residue serine 15 participates in CTP binding. Serine 15 lines the UTP pocket. 16–21 (SVGKGL) is a binding site for ATP. Tyrosine 56 serves as a coordination point for L-glutamine. Aspartate 73 is a binding site for ATP. Aspartate 73 and glutamate 143 together coordinate Mg(2+). CTP is bound by residues 150 to 152 (DIE), 190 to 195 (KTKPVQ), and lysine 226. UTP-binding positions include 190–195 (KTKPVQ) and lysine 226. A Glutamine amidotransferase type-1 domain is found at 294-538 (KVAMVGKYTK…FVTAVARLRG (245 aa)). An L-glutamine-binding site is contributed by glycine 358. Catalysis depends on cysteine 385, which acts as the Nucleophile; for glutamine hydrolysis. Residues 386-389 (FGMQ), glutamate 409, and arginine 466 contribute to the L-glutamine site. Catalysis depends on residues histidine 512 and glutamate 514.

It belongs to the CTP synthase family. As to quaternary structure, homotetramer.

The enzyme catalyses UTP + L-glutamine + ATP + H2O = CTP + L-glutamate + ADP + phosphate + 2 H(+). It catalyses the reaction L-glutamine + H2O = L-glutamate + NH4(+). It carries out the reaction UTP + NH4(+) + ATP = CTP + ADP + phosphate + 2 H(+). It participates in pyrimidine metabolism; CTP biosynthesis via de novo pathway; CTP from UDP: step 2/2. With respect to regulation, allosterically activated by GTP, when glutamine is the substrate; GTP has no effect on the reaction when ammonia is the substrate. The allosteric effector GTP functions by stabilizing the protein conformation that binds the tetrahedral intermediate(s) formed during glutamine hydrolysis. Inhibited by the product CTP, via allosteric rather than competitive inhibition. Catalyzes the ATP-dependent amination of UTP to CTP with either L-glutamine or ammonia as the source of nitrogen. Regulates intracellular CTP levels through interactions with the four ribonucleotide triphosphates. This Aeropyrum pernix (strain ATCC 700893 / DSM 11879 / JCM 9820 / NBRC 100138 / K1) protein is CTP synthase.